A 155-amino-acid chain; its full sequence is MQSKTLQNWLHLQRIVRFGDTDAAGVIHFHQLLRWSHEAWEESLDRYGLKAVDVFPSSLGISTSTSVALPIVHCEADFFLPIGIGDKLNVQLVPVRLNIGSFEVQFTFQRREQNVAVALVRHRSIDSDSRRLCDLPEGIDRWLEASSLHRGVSAI.

Residue D22 is part of the active site.

The protein belongs to the 4-hydroxybenzoyl-CoA thioesterase family. DHNA-CoA hydrolase subfamily.

The catalysed reaction is 1,4-dihydroxy-2-naphthoyl-CoA + H2O = 1,4-dihydroxy-2-naphthoate + CoA + H(+). It participates in cofactor biosynthesis; phylloquinone biosynthesis. It functions in the pathway quinol/quinone metabolism; 1,4-dihydroxy-2-naphthoate biosynthesis; 1,4-dihydroxy-2-naphthoate from chorismate: step 7/7. Its function is as follows. Catalyzes the hydrolysis of 1,4-dihydroxy-2-naphthoyl-CoA (DHNA-CoA) to 1,4-dihydroxy-2-naphthoate (DHNA), a reaction involved in phylloquinone (vitamin K1) biosynthesis. The protein is 1,4-dihydroxy-2-naphthoyl-CoA hydrolase of Prochlorococcus marinus (strain SARG / CCMP1375 / SS120).